Reading from the N-terminus, the 281-residue chain is Phosphatidylglycerol--prolipoprotein diacylglyceryl transferase (281 aa).

The next 3 helical transmembrane spans lie at 11–31 (IIFT…VISF), 57–77 (LLYS…IIFY), and 89–109 (VFYI…AIIV). Arg-140 contacts a 1,2-diacyl-sn-glycero-3-phospho-(1'-sn-glycerol). 3 helical membrane passes run 194 to 214 (PTQL…IYFF), 222 to 242 (GSIS…IEFF), and 255 to 275 (IITM…IIMY).

It belongs to the Lgt family.

Its subcellular location is the cell inner membrane. It catalyses the reaction L-cysteinyl-[prolipoprotein] + a 1,2-diacyl-sn-glycero-3-phospho-(1'-sn-glycerol) = an S-1,2-diacyl-sn-glyceryl-L-cysteinyl-[prolipoprotein] + sn-glycerol 1-phosphate + H(+). It participates in protein modification; lipoprotein biosynthesis (diacylglyceryl transfer). Catalyzes the transfer of the diacylglyceryl group from phosphatidylglycerol to the sulfhydryl group of the N-terminal cysteine of a prolipoprotein, the first step in the formation of mature lipoproteins. The sequence is that of Phosphatidylglycerol--prolipoprotein diacylglyceryl transferase from Buchnera aphidicola subsp. Acyrthosiphon pisum (strain APS) (Acyrthosiphon pisum symbiotic bacterium).